The chain runs to 273 residues: Progestin and adipoQ receptor family member 4 (273 aa).

The next 5 helical transmembrane spans lie at 52 to 72, 79 to 99, 115 to 135, 185 to 205, and 245 to 265; these read IYTH…TMPW, GWLG…SVLY, LLAL…LPII, LLVF…SLPC, and LLSV…LLWA.

Belongs to the ADIPOR family. Interacts with CERS2 and CERS5; the interaction regulates CERS2 and CERS5 stabilities and activities and is inhibited in presence of ceramides. As to expression, expressed in adipose tissue.

The protein localises to the golgi apparatus membrane. In terms of biological role, plays a role in maintaining adipose tissue function through the regulation of ceramide levels. Mediates the stability of ceramide synthetases, CERS2 and CERS5, and their activities. The sequence is that of Progestin and adipoQ receptor family member 4 from Mus musculus (Mouse).